The sequence spans 92 residues: Putative pterin-4-alpha-carbinolamine dehydratase 2 (92 aa).

This sequence belongs to the pterin-4-alpha-carbinolamine dehydratase family.

The catalysed reaction is (4aS,6R)-4a-hydroxy-L-erythro-5,6,7,8-tetrahydrobiopterin = (6R)-L-erythro-6,7-dihydrobiopterin + H2O. This chain is Putative pterin-4-alpha-carbinolamine dehydratase 2, found in Gloeobacter violaceus (strain ATCC 29082 / PCC 7421).